The primary structure comprises 72 residues: Toxin Acra II-1 (72 aa).

The region spanning 3–67 is the LCN-type CS-alpha/beta domain; the sequence is VPGNYPLNTY…VWNAAKNYCK (65 aa). Disulfide bonds link Cys-18–Cys-41, Cys-27–Cys-46, and Cys-31–Cys-48.

It belongs to the long (3 C-C) scorpion toxin superfamily. Sodium channel inhibitor family. Beta subfamily. Expressed by the venom gland.

Its subcellular location is the secreted. In terms of biological role, binds to sodium channels (Nav) and affects the channel activation process. The sequence is that of Toxin Acra II-1 from Androctonus crassicauda (Arabian fat-tailed scorpion).